We begin with the raw amino-acid sequence, 406 residues long: MSLLDTLQRGLADLDAQGLRRVRRIAYTACDAHMTVNGREIVGFASNDYLGLAAHPALVAAFAEGAQRYGSGSGGSHLLGGHSRAHARLEDELAGFAGGFSDAPRALYFSTGYMANLAAMTALAGKGATIFSDALNHASLIDGMRLSRANVQVYPHADTAALAALLDASAAETKLIVSDTVFSMDGDIAPLTELVALAERHGAWLVVDDAHGFGVLGPQGRGALAAAALRSPHLVYVGTLGKAAGVAGAFVIAHETVIEWLIQRARSYIFTTAAPPAVAHAVSASLKVIAGDEGDARRAHLAALIERTRALLRNTRWQPVDSHTAVQPLVIGSNDATLAAMRALDAHGLWVPAIRPPTVPAGTSRLRVSLSAAHSFDDLARLEAALIEASEAAAASVGAARQEAAA.

Residue Arg21 participates in substrate binding. Pyridoxal 5'-phosphate is bound at residue 112–113 (GY). His137 is a binding site for substrate. Pyridoxal 5'-phosphate-binding residues include Ser183, His211, and Thr239. An N6-(pyridoxal phosphate)lysine modification is found at Lys242. Thr358 lines the substrate pocket.

Belongs to the class-II pyridoxal-phosphate-dependent aminotransferase family. BioF subfamily. As to quaternary structure, homodimer. The cofactor is pyridoxal 5'-phosphate.

The catalysed reaction is 6-carboxyhexanoyl-[ACP] + L-alanine + H(+) = (8S)-8-amino-7-oxononanoate + holo-[ACP] + CO2. Its pathway is cofactor biosynthesis; biotin biosynthesis. Its function is as follows. Catalyzes the decarboxylative condensation of pimeloyl-[acyl-carrier protein] and L-alanine to produce 8-amino-7-oxononanoate (AON), [acyl-carrier protein], and carbon dioxide. The sequence is that of 8-amino-7-oxononanoate synthase from Burkholderia orbicola (strain MC0-3).